A 743-amino-acid chain; its full sequence is Sulfhydryl oxidase 1 (743 aa).

An N-terminal signal peptide occupies residues 1–42 (MWRRRARSGGGGGGGGGGAAPRCRWWPAVLALLAAALPAARS). Residues 43–166 (RSLYSPSDPL…LRRAIITNLE (124 aa)) enclose the Thioredoxin domain. Catalysis depends on nucleophile residues cysteine 80 and cysteine 83. 2 disulfides stabilise this stretch: cysteine 80–cysteine 83 and cysteine 111–cysteine 120. Asparagine 254, asparagine 288, asparagine 295, asparagine 371, and asparagine 401 each carry an N-linked (GlcNAc...) asparagine glycan. A disulfide bond links cysteine 407 and cysteine 419. Positions 410-513 (SEPHFRGYPC…EDPQFPKLQW (104 aa)) constitute an ERV/ALR sulfhydryl oxidase domain. FAD-binding positions include arginine 415, tryptophan 422, histidine 426, glutamate 461, histidine 465, 488–495 (WSHHNEVN), lysine 510, and tryptophan 513. Cysteine 459 and cysteine 462 are disulfide-bonded. Cysteine 519 and cysteine 522 form a disulfide bridge. The segment at 567 to 617 (ASARLSTAGLREKEEEERKEEEEEGEKETEKPHREGETGRPGSSELRRPSI) is disordered. Over residues 580–593 (EEEERKEEEEEGEK) the composition is skewed to acidic residues. Positions 594–604 (ETEKPHREGET) are enriched in basic and acidic residues. A helical transmembrane segment spans residues 707–727 (SLCIALYFLSSMCLLGMYTFF).

The protein belongs to the quiescin-sulfhydryl oxidase (QSOX) family. FAD serves as cofactor. In terms of processing, N-glycosylated. O-glycosylated on Thr and Ser residues.

It is found in the golgi apparatus membrane. Its subcellular location is the secreted. It carries out the reaction 2 R'C(R)SH + O2 = R'C(R)S-S(R)CR' + H2O2. Functionally, catalyzes the oxidation of sulfhydryl groups in peptide and protein thiols to disulfides with the reduction of oxygen to hydrogen peroxide. Plays a role in disulfide bond formation in a variety of extracellular proteins. In fibroblasts, required for normal incorporation of laminin into the extracellular matrix, and thereby for normal cell-cell adhesion and cell migration. In Gallus gallus (Chicken), this protein is Sulfhydryl oxidase 1 (QSOX1).